The primary structure comprises 335 residues: Mitochondrial fission regulator 1 (335 aa).

A mitochondrion-targeting transit peptide spans M1–Q48. Residues R134–Q170 are a coiled coil. The necessary and sufficient to promote mitochondrial fission stretch occupies residues A182–N309. The tract at residues R219 to I240 is disordered.

Belongs to the MTFR1 family. In terms of tissue distribution, widely expressed in embryonic tissues with higher expression in cartilage and hypertrophic chondrocytes. Specifically expressed in hypertrophic chondrocytes (at protein level).

Its subcellular location is the mitochondrion. Its function is as follows. May play a role in mitochondrial aerobic respiration. May also regulate mitochondrial organization and fission. The chain is Mitochondrial fission regulator 1 (MTFR1) from Gallus gallus (Chicken).